The following is a 172-amino-acid chain: Trypsin inhibitor DE-3 (172 aa).

2 disulfide bridges follow: cysteine 39–cysteine 83 and cysteine 132–cysteine 139.

The protein belongs to the protease inhibitor I3 (leguminous Kunitz-type inhibitor) family.

Functionally, inhibition of trypsin. This is Trypsin inhibitor DE-3 from Erythrina variegata (Indian coral tree).